Reading from the N-terminus, the 281-residue chain is Pantothenate synthetase (281 aa).

Residue 30–37 participates in ATP binding; it reads MGNLHQGH. Residue His37 is the Proton donor of the active site. Gln61 is a (R)-pantoate binding site. Residue Gln61 coordinates beta-alanine. 149–152 is an ATP binding site; it reads GNKD. (R)-pantoate is bound at residue Gln155. ATP-binding positions include Ile178 and 186 to 189; that span reads MSSR.

It belongs to the pantothenate synthetase family. As to quaternary structure, homodimer.

It is found in the cytoplasm. The enzyme catalyses (R)-pantoate + beta-alanine + ATP = (R)-pantothenate + AMP + diphosphate + H(+). The protein operates within cofactor biosynthesis; (R)-pantothenate biosynthesis; (R)-pantothenate from (R)-pantoate and beta-alanine: step 1/1. Its function is as follows. Catalyzes the condensation of pantoate with beta-alanine in an ATP-dependent reaction via a pantoyl-adenylate intermediate. The sequence is that of Pantothenate synthetase from Shewanella oneidensis (strain ATCC 700550 / JCM 31522 / CIP 106686 / LMG 19005 / NCIMB 14063 / MR-1).